Reading from the N-terminus, the 381-residue chain is Dual-specificity RNA methyltransferase RlmN (381 aa).

The active-site Proton acceptor is the glutamate 95. Positions 101-347 constitute a Radical SAM core domain; sequence EDDRGTLCVS…TTVRKTRGDD (247 aa). Cysteine 108 and cysteine 352 form a disulfide bridge. The [4Fe-4S] cluster site is built by cysteine 115, cysteine 119, and cysteine 122. S-adenosyl-L-methionine-binding positions include 178 to 179, serine 210, 232 to 234, and asparagine 309; these read GE and SLH. Catalysis depends on cysteine 352, which acts as the S-methylcysteine intermediate.

It belongs to the radical SAM superfamily. RlmN family. Requires [4Fe-4S] cluster as cofactor.

It localises to the cytoplasm. It catalyses the reaction adenosine(2503) in 23S rRNA + 2 reduced [2Fe-2S]-[ferredoxin] + 2 S-adenosyl-L-methionine = 2-methyladenosine(2503) in 23S rRNA + 5'-deoxyadenosine + L-methionine + 2 oxidized [2Fe-2S]-[ferredoxin] + S-adenosyl-L-homocysteine. The enzyme catalyses adenosine(37) in tRNA + 2 reduced [2Fe-2S]-[ferredoxin] + 2 S-adenosyl-L-methionine = 2-methyladenosine(37) in tRNA + 5'-deoxyadenosine + L-methionine + 2 oxidized [2Fe-2S]-[ferredoxin] + S-adenosyl-L-homocysteine. Functionally, specifically methylates position 2 of adenine 2503 in 23S rRNA and position 2 of adenine 37 in tRNAs. m2A2503 modification seems to play a crucial role in the proofreading step occurring at the peptidyl transferase center and thus would serve to optimize ribosomal fidelity. The sequence is that of Dual-specificity RNA methyltransferase RlmN from Bordetella petrii (strain ATCC BAA-461 / DSM 12804 / CCUG 43448).